A 295-amino-acid chain; its full sequence is Small ribosomal subunit protein uS2 (295 aa).

It belongs to the universal ribosomal protein uS2 family.

The sequence is that of Small ribosomal subunit protein uS2 from Rickettsia typhi (strain ATCC VR-144 / Wilmington).